The primary structure comprises 906 residues: DNA gyrase subunit A (906 aa).

The Topo IIA-type catalytic domain maps to 35 to 524; it reads IPDVRDGLKP…GEFDQDIEDL (490 aa). Y123 acts as the O-(5'-phospho-DNA)-tyrosine intermediate in catalysis. Residues 551–557 carry the GyrA-box motif; sequence QKRGGKG. The interval 886–906 is disordered; sequence SESEEDSELEEDLEQAEEVYT.

This sequence belongs to the type II topoisomerase GyrA/ParC subunit family. In terms of assembly, heterotetramer, composed of two GyrA and two GyrB chains. In the heterotetramer, GyrA contains the active site tyrosine that forms a transient covalent intermediate with DNA, while GyrB binds cofactors and catalyzes ATP hydrolysis.

The protein resides in the cytoplasm. It carries out the reaction ATP-dependent breakage, passage and rejoining of double-stranded DNA.. In terms of biological role, a type II topoisomerase that negatively supercoils closed circular double-stranded (ds) DNA in an ATP-dependent manner to modulate DNA topology and maintain chromosomes in an underwound state. Negative supercoiling favors strand separation, and DNA replication, transcription, recombination and repair, all of which involve strand separation. Also able to catalyze the interconversion of other topological isomers of dsDNA rings, including catenanes and knotted rings. Type II topoisomerases break and join 2 DNA strands simultaneously in an ATP-dependent manner. This Rickettsia felis (strain ATCC VR-1525 / URRWXCal2) (Rickettsia azadi) protein is DNA gyrase subunit A.